We begin with the raw amino-acid sequence, 69 residues long: Large ribosomal subunit protein bL31 (69 aa).

Residues C16, C18, C38, and C41 each coordinate Zn(2+).

This sequence belongs to the bacterial ribosomal protein bL31 family. Type A subfamily. As to quaternary structure, part of the 50S ribosomal subunit. The cofactor is Zn(2+).

Functionally, binds the 23S rRNA. This Cutibacterium acnes (strain DSM 16379 / KPA171202) (Propionibacterium acnes) protein is Large ribosomal subunit protein bL31.